Reading from the N-terminus, the 341-residue chain is NADH-ubiquinone oxidoreductase chain 2 (341 aa).

9 helical membrane passes run 8-28 (ILFI…NSWL), 60-80 (YFLT…LLML), 95-115 (MIIM…FWFP), 121-141 (LTWM…LMLI), 146-166 (IKYL…IGGL), 195-215 (SIWL…TFMF), 238-258 (FTLF…GFLP), 273-293 (FMLT…LRIC), and 321-341 (MIMT…YFMF).

This sequence belongs to the complex I subunit 2 family.

It is found in the mitochondrion inner membrane. It carries out the reaction a ubiquinone + NADH + 5 H(+)(in) = a ubiquinol + NAD(+) + 4 H(+)(out). Core subunit of the mitochondrial membrane respiratory chain NADH dehydrogenase (Complex I) that is believed to belong to the minimal assembly required for catalysis. Complex I functions in the transfer of electrons from NADH to the respiratory chain. The immediate electron acceptor for the enzyme is believed to be ubiquinone. The sequence is that of NADH-ubiquinone oxidoreductase chain 2 (mt:ND2) from Drosophila melanogaster (Fruit fly).